A 568-amino-acid chain; its full sequence is PTS system lactose-specific EIICB component (568 aa).

Positions 8-409 (IEKGKPFFEK…LVDTVIYYPF (402 aa)) constitute a PTS EIIC type-3 domain. 10 helical membrane-spanning segments follow: residues 30-50 (GFIS…IAYV), 65-85 (MLMT…AGTT), 103-123 (INFI…AADP), 128-148 (GFLS…AAFI), 183-203 (FAFS…VIGV), 222-242 (GYLG…VGIH), 246-266 (IVEP…AHLI), 283-303 (FIVT…FMWL), 339-359 (VFFI…KFFV), and 381-401 (IVLG…LILV). The PTS EIIB type-3 domain occupies 465 to 568 (ETNVLVLCAG…LAFVEEQFKD (104 aa)). The active-site Phosphocysteine intermediate; for EIIB activity is Cys472. Cys472 carries the post-translational modification Phosphocysteine; by EIIA.

It localises to the cell membrane. The enzyme catalyses lactose(out) + N(pros)-phospho-L-histidyl-[protein] = lactose 6-phosphate(in) + L-histidyl-[protein]. The phosphoenolpyruvate-dependent sugar phosphotransferase system (sugar PTS), a major carbohydrate active transport system, catalyzes the phosphorylation of incoming sugar substrates concomitantly with their translocation across the cell membrane. The enzyme II LacEF PTS system is involved in lactose transport. The chain is PTS system lactose-specific EIICB component from Streptococcus mutans serotype c (strain ATCC 700610 / UA159).